We begin with the raw amino-acid sequence, 628 residues long: Carbon monoxide dehydrogenase 1 (628 aa).

6 residues coordinate [4Fe-4S] cluster: cysteine 44, cysteine 52, cysteine 53, cysteine 56, cysteine 61, and cysteine 75. Residues histidine 266, cysteine 302, cysteine 340, cysteine 448, cysteine 478, and cysteine 519 each contribute to the [Ni-4Fe-5S] cluster site.

The protein belongs to the Ni-containing carbon monoxide dehydrogenase family. In terms of assembly, homodimer. Requires [4Fe-4S] cluster as cofactor. [Ni-4Fe-5S] cluster serves as cofactor.

It carries out the reaction CO + 2 oxidized [2Fe-2S]-[ferredoxin] + H2O = 2 reduced [2Fe-2S]-[ferredoxin] + CO2 + 2 H(+). Its function is as follows. CODH oxidizes carbon monoxide coupled, via CooF, to the reduction of a hydrogen cation by a hydrogenase (possibly CooH). This Methanosarcina acetivorans (strain ATCC 35395 / DSM 2834 / JCM 12185 / C2A) protein is Carbon monoxide dehydrogenase 1 (cooS1).